Reading from the N-terminus, the 67-residue chain is DNA-directed RNA polymerase subunit omega (67 aa).

The protein belongs to the RNA polymerase subunit omega family. In terms of assembly, the RNAP catalytic core consists of 2 alpha, 1 beta, 1 beta' and 1 omega subunit. When a sigma factor is associated with the core the holoenzyme is formed, which can initiate transcription.

The catalysed reaction is RNA(n) + a ribonucleoside 5'-triphosphate = RNA(n+1) + diphosphate. Promotes RNA polymerase assembly. Latches the N- and C-terminal regions of the beta' subunit thereby facilitating its interaction with the beta and alpha subunits. This is DNA-directed RNA polymerase subunit omega from Cupriavidus metallidurans (strain ATCC 43123 / DSM 2839 / NBRC 102507 / CH34) (Ralstonia metallidurans).